The primary structure comprises 206 residues: Glycerol-3-phosphate acyltransferase 1 (206 aa).

5 helical membrane-spanning segments follow: residues 14-34 (IALAAAIIGYLFGSIPFGLIL), 67-87 (ATLLLDALKASAAAWVVSYFL), 91-111 (AAIIAGFFAFIGHLFPVWIGF), 124-144 (LLGVAPIMVVLFAAVWLAVAF), and 148-168 (YSSLSALVAMLVIPVALWILG).

The protein belongs to the PlsY family. As to quaternary structure, probably interacts with PlsX.

Its subcellular location is the cell inner membrane. The catalysed reaction is an acyl phosphate + sn-glycerol 3-phosphate = a 1-acyl-sn-glycero-3-phosphate + phosphate. The protein operates within lipid metabolism; phospholipid metabolism. Its function is as follows. Catalyzes the transfer of an acyl group from acyl-phosphate (acyl-PO(4)) to glycerol-3-phosphate (G3P) to form lysophosphatidic acid (LPA). This enzyme utilizes acyl-phosphate as fatty acyl donor, but not acyl-CoA or acyl-ACP. The protein is Glycerol-3-phosphate acyltransferase 1 of Rhizobium johnstonii (strain DSM 114642 / LMG 32736 / 3841) (Rhizobium leguminosarum bv. viciae).